The primary structure comprises 786 residues: Probable glutamine--tRNA ligase (786 aa).

Over residues 181–198 the composition is skewed to basic and acidic residues; sequence DLAPKKKEKKPEGPKPSK. The disordered stretch occupies residues 181–218; sequence DLAPKKKEKKPEGPKPSKDAAAAATAPGTKNQKEASPE. The short motif at 276 to 286 is the 'HIGH' region element; that stretch reads PEPNGVLHIGH. ATP is bound by residues 277 to 279 and 283 to 289; these read EPN and HIGHAKA. L-glutamine is bound by residues Asp309 and Tyr444. Residues Thr463, 492-493, and 500-502 contribute to the ATP site; these read RL and VSK. The short motif at 499 to 503 is the 'KMSKS' region element; sequence VVSKR.

Belongs to the class-I aminoacyl-tRNA synthetase family.

It carries out the reaction tRNA(Gln) + L-glutamine + ATP = L-glutaminyl-tRNA(Gln) + AMP + diphosphate. The polypeptide is Probable glutamine--tRNA ligase (Caenorhabditis elegans).